A 1059-amino-acid chain; its full sequence is Tyrosine-protein kinase-like otk (1059 aa).

Positions 1 to 23 (MDMLMMWSICLFVCIFMAPFSCG) are cleaved as a signal peptide. Over 24–597 (SGSSSRFIQV…GDGGFLATRA (574 aa)) the chain is Extracellular. Ig-like C2-type domains follow at residues 28-112 (SRFI…REAS), 113-202 (PTAK…RVMS), 258-377 (PEGL…LAIN), 380-475 (PGIL…VSIN), and 480-570 (PKFS…AVLT). The N-linked (GlcNAc...) asparagine glycan is linked to Asn42. 4 cysteine pairs are disulfide-bonded: Cys49–Cys99, Cys141–Cys191, Cys283–Cys366, and Cys411–Cys459. N-linked (GlcNAc...) asparagine glycans are attached at residues Asn348, Asn429, Asn441, Asn456, Asn469, Asn524, and Asn536. Cys502 and Cys554 are disulfide-bonded. The helical transmembrane segment at 598 to 618 (VLITMTVALAYIVLVVGLMLW) threads the bilayer. The Cytoplasmic portion of the chain corresponds to 619-1059 (CRYRRQARKA…ALSKAMQNSE (441 aa)). The segment at 639–695 (GGEQAGGEGSTSGNPKASEQEPCLGKQQRNGRNGKSKSNGDPQKSDDTACSQQSRAS) is disordered. Polar residues predominate over residues 665–693 (QQRNGRNGKSKSNGDPQKSDDTACSQQSR). Ser698 bears the Phosphoserine mark. In terms of domain architecture, Protein kinase; inactive spans 712-1055 (LSELIQIGRG…QLGAALSKAM (344 aa)). The tract at residues 739–781 (AQANDKDSDNDKQHSNSENGSGGSSGSTTLSTLNEKRRSKTSM) is disordered. Residues 742-753 (NDKDSDNDKQHS) show a composition bias toward basic and acidic residues.

Belongs to the protein kinase superfamily. Tyr protein kinase family. Insulin receptor subfamily. As to quaternary structure, interacts with plexA; component of a receptor complex that mediates the repulsive signaling in response to Semaphorin ligands.

It is found in the cell membrane. Its function is as follows. Acts as a calcium-dependent, homophilic cell adhesion molecule that regulates neural recognition during the development of the nervous system. Component of the repulsive Plexin signaling response to regulate motor axon guidance at the embryonic stage. Also component of a receptor complex that is required in the adult visual system to innervate the lamina layer; specific targeting of R1-R6 axons. This chain is Tyrosine-protein kinase-like otk, found in Drosophila willistoni (Fruit fly).